The chain runs to 438 residues: Dolichyl-diphosphooligosaccharide--protein glycosyltransferase 48 kDa subunit (438 aa).

The first 25 residues, 1–25 (MASLRLSVLLVSVSWLLLLVSGLRA), serve as a signal peptide directing secretion. Residues 26-408 (GPRTLVLMEN…QYERFIPSAY (383 aa)) lie on the Lumenal side of the membrane. Residues 409-429 (PYYASAFSVMFGLFIFSIVFL) form a helical membrane-spanning segment. At 430 to 438 (HMKEKEKSD) the chain is on the cytoplasmic side.

This sequence belongs to the DDOST 48 kDa subunit family. In terms of assembly, component of the oligosaccharyltransferase (OST) complex.

Its subcellular location is the endoplasmic reticulum membrane. The protein operates within protein modification; protein glycosylation. In terms of biological role, subunit of the oligosaccharyl transferase (OST) complex that catalyzes the initial transfer of a defined glycan (Glc(3)Man(9)GlcNAc(2) in eukaryotes) from the lipid carrier dolichol-pyrophosphate to an asparagine residue within an Asn-X-Ser/Thr consensus motif in nascent polypeptide chains, the first step in protein N-glycosylation. N-glycosylation occurs cotranslationally and the complex associates with the Sec61 complex at the channel-forming translocon complex that mediates protein translocation across the endoplasmic reticulum (ER). All subunits are required for a maximal enzyme activity. Required for the assembly of both SST3A- and SS3B-containing OST complexes. This chain is Dolichyl-diphosphooligosaccharide--protein glycosyltransferase 48 kDa subunit, found in Xenopus laevis (African clawed frog).